Reading from the N-terminus, the 35-residue chain is 3-hydroxyisobutyrate dehydrogenase (35 aa).

Residue 4–33 (TPVGFIGLGNMGNPMAKNLMKHGYPLIIYD) participates in NAD(+) binding. Lys24 is modified (N6-acetyllysine; alternate). Lys24 carries the post-translational modification N6-succinyllysine; alternate.

The protein belongs to the HIBADH-related family. 3-hydroxyisobutyrate dehydrogenase subfamily. Homodimer.

Its subcellular location is the mitochondrion. It carries out the reaction 3-hydroxy-2-methylpropanoate + NAD(+) = 2-methyl-3-oxopropanoate + NADH + H(+). It participates in amino-acid degradation; L-valine degradation. The chain is 3-hydroxyisobutyrate dehydrogenase (HIBADH) from Oryctolagus cuniculus (Rabbit).